The following is a 583-amino-acid chain: MQNKQEQWTVLKRLMSYLKPYGLLTFLALSFLLATTVIKSVIPLVASHFIDQYLSNLNQLAVTVLLVYYGLYILQTVVQYVGNLLFARVSYSIVRDIRRDAFANMEKLGMSYFDKTPAGSIVSRLTNDTETISDMFSGILSSFISAVFIFLTTLYTMLVLDFRLTALVLLFLPLIFLLVNLYRKKSVKIIEKTRSLLSDINSKLAENIEGIRIIQAFNQEKRLQAEFDEINQEHLVYANRSVALDALFLRPAMSLLKLLGYAVLMAYFGYRGFSIGITVGTMYAFIQYINRLFDPLIEVTQNFSTLQTAMVSAGRVFALIDERTYEPLQENGQAKVQEGNIRFEHVCFSYDGKHPILDDISFSVNKGETIAFVGHTGSGKSSIINVLMRFYEFQSGRVLLDDVDIRDFSQEELRKNIGLVLQEPFLYHGTIKSNIAMYQETSDEQVQAAAAFVDADSFIQELPQGYDSPVSERGSSFSTGQRQLLAFARTVASQPKILILDEATANIDSETESLVQASLAKMRQGRTTIAIAHRLSTIQDANCIYVLDKGRIIESGTHEELLALGGTYHKMYSLQAGAMADTL.

The region spanning 25–308 (TFLALSFLLA…VTQNFSTLQT (284 aa)) is the ABC transmembrane type-1 domain. 5 helical membrane-spanning segments follow: residues 26–46 (FLAL…PLVA), 61–81 (AVTV…VQYV), 135–155 (MFSG…TTLY), 159–179 (VLDF…FLLV), and 259–279 (LGYA…GITV). The 234-residue stretch at 341 to 574 (IRFEHVCFSY…GGTYHKMYSL (234 aa)) folds into the ABC transporter domain. 374 to 381 (GHTGSGKS) lines the ATP pocket.

The protein belongs to the ABC transporter superfamily.

It is found in the cell membrane. This Streptococcus pneumoniae serotype 4 (strain ATCC BAA-334 / TIGR4) protein is Putative ABC transporter ATP-binding protein exp8 (exp8).